Here is a 358-residue protein sequence, read N- to C-terminus: tRNA-specific 2-thiouridylase MnmA 2 (358 aa).

ATP is bound by residues 11–18 (GMSGGVDS) and Met-37. Cys-106 serves as the catalytic Nucleophile. The cysteines at positions 106 and 202 are disulfide-linked. Gly-130 contacts ATP. The interval 152–154 (KDQ) is interaction with tRNA. The active-site Cysteine persulfide intermediate is the Cys-202. The segment at 308–309 (RY) is interaction with tRNA.

It belongs to the MnmA/TRMU family.

It localises to the cytoplasm. The catalysed reaction is S-sulfanyl-L-cysteinyl-[protein] + uridine(34) in tRNA + AH2 + ATP = 2-thiouridine(34) in tRNA + L-cysteinyl-[protein] + A + AMP + diphosphate + H(+). In terms of biological role, catalyzes the 2-thiolation of uridine at the wobble position (U34) of tRNA, leading to the formation of s(2)U34. This Clostridium tetani (strain Massachusetts / E88) protein is tRNA-specific 2-thiouridylase MnmA 2.